The primary structure comprises 244 residues: Protein crossbronx (244 aa).

The UBC core domain maps to 20 to 176; the sequence is QQEYKILAEY…VQKNIKESKD (157 aa).

It belongs to the ubiquitin-conjugating enzyme family. FTS subfamily.

The sequence is that of Protein crossbronx (cbx) from Drosophila yakuba (Fruit fly).